The primary structure comprises 207 residues: Thiamine-phosphate synthase (207 aa).

4-amino-2-methyl-5-(diphosphooxymethyl)pyrimidine is bound by residues 36 to 40 (QLRIK) and Asp-68. Mg(2+)-binding residues include Asp-69 and Asp-88. Residue Ser-106 participates in 4-amino-2-methyl-5-(diphosphooxymethyl)pyrimidine binding. 132–134 (TQT) contributes to the 2-[(2R,5Z)-2-carboxy-4-methylthiazol-5(2H)-ylidene]ethyl phosphate binding site. Lys-135 serves as a coordination point for 4-amino-2-methyl-5-(diphosphooxymethyl)pyrimidine. 2-[(2R,5Z)-2-carboxy-4-methylthiazol-5(2H)-ylidene]ethyl phosphate contacts are provided by residues Gly-162 and 182-183 (VS).

The protein belongs to the thiamine-phosphate synthase family. Requires Mg(2+) as cofactor.

It carries out the reaction 2-[(2R,5Z)-2-carboxy-4-methylthiazol-5(2H)-ylidene]ethyl phosphate + 4-amino-2-methyl-5-(diphosphooxymethyl)pyrimidine + 2 H(+) = thiamine phosphate + CO2 + diphosphate. The catalysed reaction is 2-(2-carboxy-4-methylthiazol-5-yl)ethyl phosphate + 4-amino-2-methyl-5-(diphosphooxymethyl)pyrimidine + 2 H(+) = thiamine phosphate + CO2 + diphosphate. The enzyme catalyses 4-methyl-5-(2-phosphooxyethyl)-thiazole + 4-amino-2-methyl-5-(diphosphooxymethyl)pyrimidine + H(+) = thiamine phosphate + diphosphate. It functions in the pathway cofactor biosynthesis; thiamine diphosphate biosynthesis; thiamine phosphate from 4-amino-2-methyl-5-diphosphomethylpyrimidine and 4-methyl-5-(2-phosphoethyl)-thiazole: step 1/1. Condenses 4-methyl-5-(beta-hydroxyethyl)thiazole monophosphate (THZ-P) and 2-methyl-4-amino-5-hydroxymethyl pyrimidine pyrophosphate (HMP-PP) to form thiamine monophosphate (TMP). The chain is Thiamine-phosphate synthase from Pyrococcus horikoshii (strain ATCC 700860 / DSM 12428 / JCM 9974 / NBRC 100139 / OT-3).